The primary structure comprises 82 residues: EMBRYO SURROUNDING FACTOR 1-like protein 10 (82 aa).

The signal sequence occupies residues 1-22 (MSSLYFAILCLFMIFLVPLHEF). Disulfide bonds link cysteine 39-cysteine 55, cysteine 44-cysteine 74, cysteine 53-cysteine 70, and cysteine 56-cysteine 63.

This sequence belongs to the MEG family. As to expression, expressed in stems, leaves and flowers.

This chain is EMBRYO SURROUNDING FACTOR 1-like protein 10 (ESFL10), found in Arabidopsis thaliana (Mouse-ear cress).